We begin with the raw amino-acid sequence, 461 residues long: METLFNSSVAVSGRDQQSTGFAWWSGNARLINLSGKLLGAHVAHAGLIVFWTGAMTLFEVAHFIPEKPMYEQGLILLPHLATLGWGVGPGGEVIDVYPYFVVGVLHLVSSAVLGFGGLYHAIIGPEVLEESFPFFGYDWKDKNKMTTIIGIHLILLGSGALLLVLKAMFFGGVYDTWAPGGGDVRVISNPTLNPTVIFSYITKSPWGGDGWIVSVDNMEDIIGGHIWLAFICIIGGVWHILTKPFSWARRALVWSGEAYLSYSLAALALMGFIANCFVWFNNTAYPSEFFGPTGPEASQAQAFTFLVRDQRLGANVGSAQGPTGLGKYLMRSPSGEIIFGGETMRFWDTRAPWLEPLRGANGLDLTKIKYDIQPWQERRAAEYMTHAPLGSLNSVGGVATEINSVNYVSPRSWLSTSHFVLGFFLFIGHLWHAGRARAASGGFEKGLDRENEPVLSMKLLD.

A propeptide spanning residues 1-2 is cleaved from the precursor; sequence ME. Position 3 is an N-acetylthreonine (T3). Phosphothreonine is present on T3. 5 helical membrane passes run 57 to 81, 122 to 143, 166 to 188, 243 to 263, and 279 to 300; these read LFEVAHFIPEKPMYEQGLILLPHLA, IIGPEVLEESFPFFGYDWKDKN, KAMFFGGVYDTWAPGGGDVRVIS, KPFSWARRALVWSGEAYLSYS, and WFNNTAYPSEFFGPTGPEASQA. E355 is a binding site for [CaMn4O5] cluster. A helical transmembrane segment spans residues 435 to 459; the sequence is RARAASGGFEKGLDRENEPVLSMKL.

This sequence belongs to the PsbB/PsbC family. PsbC subfamily. PSII is composed of 1 copy each of membrane proteins PsbA, PsbB, PsbC, PsbD, PsbE, PsbF, PsbH, PsbI, PsbJ, PsbK, PsbL, PsbM, PsbT, PsbX, PsbY, PsbZ, Psb30/Ycf12, at least 3 peripheral proteins of the oxygen-evolving complex and a large number of cofactors. It forms dimeric complexes. It depends on Binds multiple chlorophylls and provides some of the ligands for the Ca-4Mn-5O cluster of the oxygen-evolving complex. It may also provide a ligand for a Cl- that is required for oxygen evolution. PSII binds additional chlorophylls, carotenoids and specific lipids. as a cofactor.

It is found in the plastid. Its subcellular location is the cyanelle thylakoid membrane. In terms of biological role, one of the components of the core complex of photosystem II (PSII). It binds chlorophyll and helps catalyze the primary light-induced photochemical processes of PSII. PSII is a light-driven water:plastoquinone oxidoreductase, using light energy to abstract electrons from H(2)O, generating O(2) and a proton gradient subsequently used for ATP formation. The sequence is that of Photosystem II CP43 reaction center protein from Cyanophora paradoxa.